Consider the following 301-residue polypeptide: Probable alpha-L-glutamate ligase (301 aa).

The region spanning 104 to 287 (LQLLSRKGIG…IAGIIIQYLE (184 aa)) is the ATP-grasp domain. ATP-binding positions include lysine 141, 178 to 179 (EY), aspartate 187, and 211 to 213 (RSN). Mg(2+) contacts are provided by aspartate 248, glutamate 260, and asparagine 262. Aspartate 248, glutamate 260, and asparagine 262 together coordinate Mn(2+).

This sequence belongs to the RimK family. Mg(2+) is required as a cofactor. It depends on Mn(2+) as a cofactor.

The polypeptide is Probable alpha-L-glutamate ligase (Pseudomonas aeruginosa (strain UCBPP-PA14)).